The chain runs to 330 residues: GTPase Obg (330 aa).

Residues 1-159 form the Obg domain; the sequence is MQFIDQARIT…WPLQLELKLL (159 aa). The OBG-type G domain occupies 160–328; it reads AEVGIIGLPN…LLERVWKELG (169 aa). ATP is bound by residues 166–173, 191–195, 213–216, 280–283, and 309–311; these read GLPNAGKS, FTTLV, DIPG, NKQE, and SAA. Ser-173 and Thr-193 together coordinate Mg(2+).

This sequence belongs to the TRAFAC class OBG-HflX-like GTPase superfamily. OBG GTPase family. Monomer. The cofactor is Mg(2+).

The protein localises to the cytoplasm. In terms of biological role, an essential GTPase which binds GTP, GDP and possibly (p)ppGpp with moderate affinity, with high nucleotide exchange rates and a fairly low GTP hydrolysis rate. Plays a role in control of the cell cycle, stress response, ribosome biogenesis and in those bacteria that undergo differentiation, in morphogenesis control. This Parasynechococcus marenigrum (strain WH8102) protein is GTPase Obg.